The primary structure comprises 342 residues: Foldase protein PrsA (342 aa).

The signal sequence occupies residues 1-20; the sequence is MKKKLILAAAGAMAVFSLAA. C21 carries N-palmitoyl cysteine lipidation. Residue C21 is the site of S-diacylglycerol cysteine attachment. A PpiC domain is found at 142-235; it reads HPEVEAQIIQ…QTYQTTYYVV (94 aa). Positions 297 to 342 are disordered; sequence MQTESSSASSEKKESKSSDSKTSDTKTSDSEKATDSSSKTTESSSK. The segment covering 306–330 has biased composition (basic and acidic residues); sequence SEKKESKSSDSKTSDTKTSDSEKAT. Residues 331-342 show a composition bias toward low complexity; sequence DSSSKTTESSSK.

The protein belongs to the PrsA family.

It localises to the cell membrane. The enzyme catalyses [protein]-peptidylproline (omega=180) = [protein]-peptidylproline (omega=0). Functionally, plays a major role in protein secretion by helping the post-translocational extracellular folding of several secreted proteins. The sequence is that of Foldase protein PrsA from Enterococcus faecalis (strain ATCC 700802 / V583).